A 761-amino-acid chain; its full sequence is Cytoplasmic export protein 1 (761 aa).

2 HEAT repeats span residues 385–423 (IYPH…LNNE) and 498–534 (NTIA…LEKL). 2 disordered regions span residues 660 to 692 (DDGW…IAPS) and 714 to 761 (STVT…DTNW). 2 stretches are compositionally biased toward polar residues: residues 680–692 (PQNS…IAPS) and 714–737 (STVT…SIRG). Residues 747-761 (GWDDDGDSDSWDTNW) show a composition bias toward acidic residues. Ser754 is subject to Phosphoserine.

As to quaternary structure, associates with the nuclear pore complex (NPC). Interacts with GSP1, LOS1, MSN5, NUP116 and TEF2.

Its subcellular location is the cytoplasm. Component of the nuclear tRNA export machinery that my collect tRNA from the nuclear tRNA export receptors of the aminoacylation-dependent export and may deliver aminoacylated tRNAs to the translation machinery pathway at the nuclear pore complex. The polypeptide is Cytoplasmic export protein 1 (CEX1) (Saccharomyces cerevisiae (strain ATCC 204508 / S288c) (Baker's yeast)).